Reading from the N-terminus, the 137-residue chain is Nucleoside diphosphate kinase (137 aa).

ATP-binding residues include lysine 10, phenylalanine 59, arginine 87, threonine 93, arginine 104, and asparagine 114. Catalysis depends on histidine 117, which acts as the Pros-phosphohistidine intermediate.

It belongs to the NDK family. As to quaternary structure, homotetramer. It depends on Mg(2+) as a cofactor.

Its subcellular location is the cytoplasm. The enzyme catalyses a 2'-deoxyribonucleoside 5'-diphosphate + ATP = a 2'-deoxyribonucleoside 5'-triphosphate + ADP. It carries out the reaction a ribonucleoside 5'-diphosphate + ATP = a ribonucleoside 5'-triphosphate + ADP. Its function is as follows. Major role in the synthesis of nucleoside triphosphates other than ATP. The ATP gamma phosphate is transferred to the NDP beta phosphate via a ping-pong mechanism, using a phosphorylated active-site intermediate. In Streptomyces griseus subsp. griseus (strain JCM 4626 / CBS 651.72 / NBRC 13350 / KCC S-0626 / ISP 5235), this protein is Nucleoside diphosphate kinase.